The following is a 560-amino-acid chain: DNA ligase B (560 aa).

Lysine 124 (N6-AMP-lysine intermediate) is an active-site residue.

It belongs to the NAD-dependent DNA ligase family. LigB subfamily.

The enzyme catalyses NAD(+) + (deoxyribonucleotide)n-3'-hydroxyl + 5'-phospho-(deoxyribonucleotide)m = (deoxyribonucleotide)n+m + AMP + beta-nicotinamide D-nucleotide.. Its function is as follows. Catalyzes the formation of phosphodiester linkages between 5'-phosphoryl and 3'-hydroxyl groups in double-stranded DNA using NAD as a coenzyme and as the energy source for the reaction. The chain is DNA ligase B from Shigella sonnei (strain Ss046).